We begin with the raw amino-acid sequence, 277 residues long: Urease accessory protein UreD (277 aa).

This sequence belongs to the UreD family. As to quaternary structure, ureD, UreF and UreG form a complex that acts as a GTP-hydrolysis-dependent molecular chaperone, activating the urease apoprotein by helping to assemble the nickel containing metallocenter of UreC. The UreE protein probably delivers the nickel.

The protein resides in the cytoplasm. In terms of biological role, required for maturation of urease via the functional incorporation of the urease nickel metallocenter. This Pseudomonas entomophila (strain L48) protein is Urease accessory protein UreD.